Consider the following 525-residue polypeptide: Allantoate deiminase (525 aa).

Positions 1-53 (MAVPHPSSSSSRSHPFLSHVYHTSFHHHHHHNHPSLVLFWCLVFSLLSPLALS) are cleaved as a signal peptide. The segment covering 56 to 75 (SSSSSSSSDSSSSSSSHISL) has biased composition (low complexity). The interval 56–78 (SSSSSSSSDSSSSSSSHISLGIG) is disordered. Residue Asn-156 is glycosylated (N-linked (GlcNAc...) asparagine). Residues His-167, Asp-178, Glu-215, His-281, and His-499 each contribute to the Mn(2+) site.

Belongs to the peptidase M20A family. Homodimer. Requires Mn(2+) as cofactor. As to expression, expressed in seedlings, roots, stems, leaves, flowers, siliques and seeds.

It localises to the endoplasmic reticulum. It carries out the reaction allantoate + H2O + 2 H(+) = (S)-2-ureidoglycine + NH4(+) + CO2. Its activity is regulated as follows. Inhibited by borate, fluoride, L-Asn and L-Asp, but not by phenylphosphorodiamidate. In terms of biological role, involved in the catabolism of purine nucleotides. Can use allantoate as substrate, but not Nalpha-carbamoyl-L-Asp, Nalpha-carbamoyl-L-Ala or Nalpha-carbamoyl-Gly. The sequential activity of AAH, UGLYAH and UAH allows a complete purine breakdown without the intermediate generation of urea. Involved in the regulation of seed maturation and seed dormancy. This Arabidopsis thaliana (Mouse-ear cress) protein is Allantoate deiminase.